The chain runs to 189 residues: Ras-like protein 1 (189 aa).

A GTP-binding site is contributed by 10 to 17 (GAGGVGKS). Positions 32-40 (YDPTIEDSY) match the Effector region motif. GTP contacts are provided by residues 57–61 (DTAGQ) and 116–119 (NKCD). Cys-186 carries the cysteine methyl ester modification. Residue Cys-186 is the site of S-geranylgeranyl cysteine attachment. Positions 187-189 (KML) are cleaved as a propeptide — removed in mature form.

Belongs to the small GTPase superfamily. Ras family.

The protein localises to the cell membrane. It carries out the reaction GTP + H2O = GDP + phosphate + H(+). With respect to regulation, alternates between an inactive form bound to GDP and an active form bound to GTP. Activated by a guanine nucleotide-exchange factor (GEF) and inactivated by a GTPase-activating protein (GAP). Functionally, ras proteins bind GDP/GTP and possess intrinsic GTPase activity. Plays a role in eye development by regulating cell growth, survival of postmitotic ommatidial cells and differentiation of photoreceptor cells. During larval development, mediates Ptth/tor signaling leading to the production of ecdysone, a hormone required for the initiation of metamorphosis. This chain is Ras-like protein 1, found in Drosophila virilis (Fruit fly).